The following is a 193-amino-acid chain: Partner of Y14 and mago (193 aa).

2 disordered regions span residues 1-27 (MSTPTAYEHDADGSKFIPATQRPDGTW) and 118-142 (IQEPTLPSQSVPTESISQSDPTKRL). Polar residues predominate over residues 122-137 (TLPSQSVPTESISQSD). Residues 139–192 (TKRLKNLRKKLREIEFLEEKIKAGLLKSPDKDQKEKMSKKNEILNEIDILKNSI) adopt a coiled-coil conformation.

Belongs to the pym family. Interacts (via N-terminus) with mago and tsu/Y14; the interaction is direct.

It localises to the cytoplasm. It is found in the nucleus. Regulator of the exon junction complex (EJC), a multiprotein complex that associates immediately upstream of the exon-exon junction on mRNAs and serves as a positional landmarks for the intron exon structure of genes and directs post-transcriptional processes in the cytoplasm such as mRNA export, nonsense-mediated mRNA decay (NMD) or translation. The sequence is that of Partner of Y14 and mago from Bombyx mori (Silk moth).